A 523-amino-acid polypeptide reads, in one-letter code: GMP synthase [glutamine-hydrolyzing] (523 aa).

In terms of domain architecture, Glutamine amidotransferase type-1 spans 8-205 (KILILDFGSQ…VVNICGCTTN (198 aa)). Cys85 (nucleophile) is an active-site residue. Active-site residues include His179 and Glu181. One can recognise a GMPS ATP-PPase domain in the interval 206–398 (WTPENIIEDA…LGLPAEMLNR (193 aa)). Residue 233–239 (SGGVDSS) coordinates ATP.

As to quaternary structure, homodimer.

It carries out the reaction XMP + L-glutamine + ATP + H2O = GMP + L-glutamate + AMP + diphosphate + 2 H(+). It participates in purine metabolism; GMP biosynthesis; GMP from XMP (L-Gln route): step 1/1. In terms of biological role, catalyzes the synthesis of GMP from XMP. The polypeptide is GMP synthase [glutamine-hydrolyzing] (Mannheimia succiniciproducens (strain KCTC 0769BP / MBEL55E)).